A 523-amino-acid chain; its full sequence is 2-isopropylmalate synthase (523 aa).

The 263-residue stretch at 5–267 (VIIFDTTLRD…HTAINHQEIW (263 aa)) folds into the Pyruvate carboxyltransferase domain. Positions 14, 202, 204, and 238 each coordinate Mn(2+). The segment at 392-523 (RLDYFSVQSG…QHNENNKETV (132 aa)) is regulatory domain.

This sequence belongs to the alpha-IPM synthase/homocitrate synthase family. LeuA type 1 subfamily. In terms of assembly, homodimer. Requires Mn(2+) as cofactor.

Its subcellular location is the cytoplasm. The enzyme catalyses 3-methyl-2-oxobutanoate + acetyl-CoA + H2O = (2S)-2-isopropylmalate + CoA + H(+). It functions in the pathway amino-acid biosynthesis; L-leucine biosynthesis; L-leucine from 3-methyl-2-oxobutanoate: step 1/4. Catalyzes the condensation of the acetyl group of acetyl-CoA with 3-methyl-2-oxobutanoate (2-ketoisovalerate) to form 3-carboxy-3-hydroxy-4-methylpentanoate (2-isopropylmalate). The chain is 2-isopropylmalate synthase from Shigella flexneri serotype 5b (strain 8401).